Consider the following 177-residue polypeptide: Probable inosine/xanthosine triphosphatase (177 aa).

This sequence belongs to the YjjX NTPase family. In terms of assembly, homodimer. Mg(2+) serves as cofactor. Mn(2+) is required as a cofactor.

It catalyses the reaction XTP + H2O = XDP + phosphate + H(+). The enzyme catalyses ITP + H2O = IDP + phosphate + H(+). Its function is as follows. Phosphatase that hydrolyzes non-canonical purine nucleotides such as XTP and ITP to their respective diphosphate derivatives. Probably excludes non-canonical purines from DNA/RNA precursor pool, thus preventing their incorporation into DNA/RNA and avoiding chromosomal lesions. The sequence is that of Probable inosine/xanthosine triphosphatase from Pyrobaculum islandicum (strain DSM 4184 / JCM 9189 / GEO3).